A 281-amino-acid polypeptide reads, in one-letter code: MHHDPNPFDEGADDNPFSNGGGGGARRGGGGGGGGGGGGGKSQFSFGFGGLGGGSKGGATVDIPLDNMSDSKGKGKELLQWEADLKRREADIRRREEALKSAGVPMEEKNWPPFFPIIHHDIANEIPANAQKLQYLAFASWLGIVLCLFWNFIAVIVCWIRGGDSKLFFLATIYGMLGMPLSYLMWYRPLYRAMRTDSAFSFGWFFLCYMLHIAFCVFAAIAPPVIFRGKSLTGILAAIDTFSDHAIVGIFYFVGFALFCLETLVSIWVLQKVYMYFRGHK.

The interval 1-49 is disordered; sequence MHHDPNPFDEGADDNPFSNGGGGGARRGGGGGGGGGGGGGKSQFSFGFG. Residues 1–139 are Cytoplasmic-facing; the sequence is MHHDPNPFDE…AQKLQYLAFA (139 aa). Residues 19-49 show a composition bias toward gly residues; it reads NGGGGGARRGGGGGGGGGGGGGKSQFSFGFG. A coiled-coil region spans residues 76–102; that stretch reads KELLQWEADLKRREADIRRREEALKSA. Helical transmembrane passes span 140-160, 167-187, 202-222, and 250-270; these read SWLG…VCWI, LFFL…LMWY, FGWF…AAIA, and IFYF…IWVL. Topologically, residues 271–281 are cytoplasmic; sequence QKVYMYFRGHK.

The protein belongs to the SCAMP family.

It localises to the cell membrane. It is found in the cytoplasmic vesicle. The protein resides in the secretory vesicle membrane. In terms of biological role, probably involved in membrane trafficking. The sequence is that of Secretory carrier-associated membrane protein 5 (SCAMP5) from Oryza sativa subsp. japonica (Rice).